Reading from the N-terminus, the 215-residue chain is Cytochrome b6 (215 aa).

Residues 32–52 traverse the membrane as a helical segment; it reads IFYCLGGITLTCFLVQVATGF. Heme c is bound at residue C35. 2 residues coordinate heme b: H86 and H100. 3 helical membrane passes run 90-110, 116-136, and 186-206; these read ASMM…TGGF, LTWV…VTGY, and LHTF…FLMI. Positions 187 and 202 each coordinate heme b.

This sequence belongs to the cytochrome b family. PetB subfamily. In terms of assembly, the 4 large subunits of the cytochrome b6-f complex are cytochrome b6, subunit IV (17 kDa polypeptide, PetD), cytochrome f and the Rieske protein, while the 4 small subunits are PetG, PetL, PetM and PetN. The complex functions as a dimer. It depends on heme b as a cofactor. The cofactor is heme c.

The protein localises to the plastid. It localises to the chloroplast thylakoid membrane. Its function is as follows. Component of the cytochrome b6-f complex, which mediates electron transfer between photosystem II (PSII) and photosystem I (PSI), cyclic electron flow around PSI, and state transitions. This is Cytochrome b6 from Pinus thunbergii (Japanese black pine).